Reading from the N-terminus, the 186-residue chain is Ribosome-recycling factor (186 aa).

This sequence belongs to the RRF family.

It is found in the cytoplasm. Functionally, responsible for the release of ribosomes from messenger RNA at the termination of protein biosynthesis. May increase the efficiency of translation by recycling ribosomes from one round of translation to another. The protein is Ribosome-recycling factor of Pelodictyon phaeoclathratiforme (strain DSM 5477 / BU-1).